The chain runs to 469 residues: Exodeoxyribonuclease 7 large subunit (469 aa).

This sequence belongs to the XseA family. Heterooligomer composed of large and small subunits.

Its subcellular location is the cytoplasm. The enzyme catalyses Exonucleolytic cleavage in either 5'- to 3'- or 3'- to 5'-direction to yield nucleoside 5'-phosphates.. Functionally, bidirectionally degrades single-stranded DNA into large acid-insoluble oligonucleotides, which are then degraded further into small acid-soluble oligonucleotides. The polypeptide is Exodeoxyribonuclease 7 large subunit (Mycoplasma mycoides subsp. mycoides SC (strain CCUG 32753 / NCTC 10114 / PG1)).